Consider the following 245-residue polypeptide: tRNA1(Val) (adenine(37)-N6)-methyltransferase (245 aa).

Belongs to the methyltransferase superfamily. tRNA (adenine-N(6)-)-methyltransferase family.

It localises to the cytoplasm. It catalyses the reaction adenosine(37) in tRNA1(Val) + S-adenosyl-L-methionine = N(6)-methyladenosine(37) in tRNA1(Val) + S-adenosyl-L-homocysteine + H(+). In terms of biological role, specifically methylates the adenine in position 37 of tRNA(1)(Val) (anticodon cmo5UAC). In Citrobacter koseri (strain ATCC BAA-895 / CDC 4225-83 / SGSC4696), this protein is tRNA1(Val) (adenine(37)-N6)-methyltransferase.